A 179-amino-acid chain; its full sequence is Replication restart protein DnaT (179 aa).

Residues 156–179 (GGLPKRDVNTVSEPDSQIPPGFRG) are disordered.

The protein belongs to the DnaT family. In terms of assembly, homooligomerizes. Interacts with PriB. Component of the replication restart primosome. Primosome assembly occurs via a 'hand-off' mechanism. PriA binds to replication forks, subsequently PriB then DnaT bind; DnaT then displaces ssDNA to generate the helicase loading substrate.

Involved in the restart of stalled replication forks, which reloads the replicative helicase on sites other than the origin of replication. Can function in multiple replication restart pathways. Displaces ssDNA from a PriB-ssDNA complex. Probably forms a spiral filament on ssDNA. The sequence is that of Replication restart protein DnaT from Escherichia coli O157:H7.